Here is a 37-residue protein sequence, read N- to C-terminus: Large ribosomal subunit protein bL36 (37 aa).

Belongs to the bacterial ribosomal protein bL36 family.

This is Large ribosomal subunit protein bL36 from Staphylococcus epidermidis (strain ATCC 35984 / DSM 28319 / BCRC 17069 / CCUG 31568 / BM 3577 / RP62A).